A 129-amino-acid polypeptide reads, in one-letter code: Small ribosomal subunit protein uS11 (129 aa).

It belongs to the universal ribosomal protein uS11 family. In terms of assembly, part of the 30S ribosomal subunit. Interacts with proteins S7 and S18. Binds to IF-3.

In terms of biological role, located on the platform of the 30S subunit, it bridges several disparate RNA helices of the 16S rRNA. Forms part of the Shine-Dalgarno cleft in the 70S ribosome. The sequence is that of Small ribosomal subunit protein uS11 from Mannheimia succiniciproducens (strain KCTC 0769BP / MBEL55E).